The following is a 288-amino-acid chain: uncharacterized protein (288 aa).

The HTH lysR-type domain occupies 1 to 59 (MDKLNAISIFCKVIETQSFTLAAKQQNISVAMASKLVSQLEEHLKTRLLQRTTRKIMPT). The segment at residues 19 to 38 (FTLAAKQQNISVAMASKLVS) is a DNA-binding region (H-T-H motif).

It belongs to the LysR transcriptional regulatory family.

This is an uncharacterized protein from Haemophilus influenzae (strain ATCC 51907 / DSM 11121 / KW20 / Rd).